A 449-amino-acid polypeptide reads, in one-letter code: Hyaluronidase (449 aa).

A signal peptide spans 1–23; it reads MYHLWIKCLAAWIFLKRFNGVHV. Intrachain disulfides connect C47-C340 and C211-C227. N-linked (GlcNAc...) asparagine glycosylation is found at N67 and N103. E135 acts as the Proton donor in catalysis. The N-linked (GlcNAc...) asparagine glycan is linked to N153. N357 carries N-linked (GlcNAc...) asparagine glycosylation. 3 disulfide bridges follow: C365/C376, C370/C427, and C429/C438. A glycan (N-linked (GlcNAc...) asparagine) is linked at N401. The EGF-like domain occupies 427-438; the sequence is CQCYQGWQGLYC.

Belongs to the glycosyl hydrolase 56 family. As to quaternary structure, monomer. As to expression, expressed by the venom gland.

The protein resides in the secreted. The catalysed reaction is Random hydrolysis of (1-&gt;4)-linkages between N-acetyl-beta-D-glucosamine and D-glucuronate residues in hyaluronate.. In terms of biological role, snake venom endo-hyaluronidase that degrades hyaluronan to smaller oligosaccharide fragments. In venom, it is not toxic by itself, but increases the diffusion of other venom proteins by degrading the extracellular matrix. In addition, it displays antiedematogenic activity. The sequence is that of Hyaluronidase from Echis ocellatus (Ocellated saw-scaled viper).